The chain runs to 403 residues: Phosphomevalonate dehydratase large subunit (403 aa).

Positions 48, 49, 50, 79, and 80 each coordinate (R)-5-phosphomevalonate. Position 119 (cysteine 119) interacts with [4Fe-4S] cluster. Positions 138 and 139 each coordinate (R)-5-phosphomevalonate. [4Fe-4S] cluster is bound by residues cysteine 301 and cysteine 358. (R)-5-phosphomevalonate is bound at residue lysine 378.

It belongs to the AcnX type II large subunit family. As to quaternary structure, heterodimer composed of a large subunit (PMDh-L) and a small subunit (PMDh-S). Requires [4Fe-4S] cluster as cofactor.

It carries out the reaction (R)-5-phosphomevalonate = (2E)-3-methyl-5-phosphooxypent-2-enoate + H2O. It participates in isoprenoid biosynthesis; isopentenyl diphosphate biosynthesis via mevalonate pathway. In terms of biological role, component of a hydro-lyase that catalyzes the dehydration of mevalonate 5-phosphate (MVA5P) to form trans-anhydromevalonate 5-phosphate (tAHMP). Involved in the archaeal mevalonate (MVA) pathway, which provides fundamental precursors for isoprenoid biosynthesis, such as isopentenyl diphosphate (IPP) and dimethylallyl diphosphate (DMAPP). The protein is Phosphomevalonate dehydratase large subunit of Methanocaldococcus jannaschii (strain ATCC 43067 / DSM 2661 / JAL-1 / JCM 10045 / NBRC 100440) (Methanococcus jannaschii).